The following is a 155-amino-acid chain: Cyanate hydratase (155 aa).

Residues Arg92, Glu95, and Ser118 contribute to the active site.

It belongs to the cyanase family.

The catalysed reaction is cyanate + hydrogencarbonate + 3 H(+) = NH4(+) + 2 CO2. Catalyzes the reaction of cyanate with bicarbonate to produce ammonia and carbon dioxide. The polypeptide is Cyanate hydratase (Mycobacterium avium (strain 104)).